The chain runs to 435 residues: Cytochrome c biogenesis protein Ccs1 (435 aa).

The next 3 helical transmembrane spans lie at 17-37 (LSLSISLLLLIASISIIGTII), 77-97 (NPCFVLVLVLFFCSLLACTFS), and 163-183 (IAPIVVHFSIILTFIGSLISL).

It belongs to the Ccs1/CcsB family. As to quaternary structure, may interact with CcsA.

The protein resides in the plastid. It localises to the chloroplast thylakoid membrane. Its function is as follows. Required during biogenesis of c-type cytochromes (cytochrome c6 and cytochrome f) at the step of heme attachment. This Gracilaria tenuistipitata var. liui (Red alga) protein is Cytochrome c biogenesis protein Ccs1.